The following is a 317-amino-acid chain: Transcriptional activator protein med (317 aa).

Positions 1-17 (MITRLVMIFSVLLLLSG) are cleaved as a signal peptide. C18 carries N-palmitoyl cysteine lipidation. The S-diacylglycerol cysteine moiety is linked to residue C18.

The protein belongs to the BMP lipoprotein family.

The protein localises to the cell membrane. Its function is as follows. Positive activator of the comK gene. In Bacillus subtilis (strain 168), this protein is Transcriptional activator protein med (med).